The primary structure comprises 469 residues: Glutamine synthetase (469 aa).

Residues 14–99 enclose the GS beta-grasp domain; that stretch reads NDVKFVDLRF…VCDILDPVSG (86 aa). The region spanning 106–469 is the GS catalytic domain; the sequence is RRGTAKKAEA…PVEYDMYYSA (364 aa). Glu131 and Glu133 together coordinate Mg(2+). Glu209 serves as a coordination point for ATP. Residues Glu214 and Asp221 each contribute to the Mg(2+) site. L-glutamate-binding positions include 265–266 and Gly266; that span reads NG. His270 is a Mg(2+) binding site. Residues 272 to 274 and Ser274 each bind ATP; that span reads HQS. Positions 322, 328, and 340 each coordinate L-glutamate. Positions 340, 345, and 353 each coordinate ATP. Glu358 is a binding site for Mg(2+). Residue Arg360 coordinates L-glutamate. Tyr398 is modified (O-AMP-tyrosine).

The protein belongs to the glutamine synthetase family. Oligomer of 12 subunits arranged in the form of two hexameric ring. Mg(2+) serves as cofactor.

Its subcellular location is the cytoplasm. The catalysed reaction is L-glutamate + NH4(+) + ATP = L-glutamine + ADP + phosphate + H(+). The activity of this enzyme could be controlled by adenylation under conditions of abundant glutamine. Catalyzes the ATP-dependent biosynthesis of glutamine from glutamate and ammonia. This is Glutamine synthetase from Rhizobium leguminosarum bv. viciae.